Here is a 279-residue protein sequence, read N- to C-terminus: Probable diacylglycerol pyrophosphate phosphatase 1 (279 aa).

Over 1–17 the chain is Lumenal; that stretch reads MEAVGKHVKLFWNVYSD. Residues 18–38 form a helical membrane-spanning segment; that stretch reads YAVLIAISLSYFVFDVLMLPF. Residues 39-58 lie on the Cytoplasmic side of the membrane; it reads TRQFSLEDITISHPFALHEQ. The helical transmembrane segment at 59 to 79 threads the bilayer; it reads VPTKYLGIICVFFPALVLYGF. The Lumenal segment spans residues 80 to 86; the sequence is GKLRNNS. Residues 87–107 form a helical membrane-spanning segment; sequence LLFWKSLMGLLYSTMVCGLCV. Residues 108-163 are Cytoplasmic-facing; that stretch reads SLLKNAVGRPRPDFLARCQPFESTPKTGLVDVLSCSVPWSDKVLQDGFRSFPSGHT. The tract at residues 111-119 is phosphatase sequence motif I; the sequence is KNAVGRPRP. A phosphatase sequence motif II region spans residues 159-162; sequence PSGH. A helical membrane pass occupies residues 164–184; sequence SFSFAGLGFLAIFLAGQLKMF. Residues 185 to 187 are Lumenal-facing; it reads RNK. The helical transmembrane segment at 188–208 threads the bilayer; that stretch reads TSSWKVVVPLVPLSIASWIGL. The Cytoplasmic portion of the chain corresponds to 209–220; sequence SRSQDYRHHKED. Residues 209–220 are phosphatase sequence motif III; the sequence is SRSQDYRHHKED. A helical transmembrane segment spans residues 221–241; that stretch reads IAVGALFGFAIAYVVYRQLFP. Residues 242–279 are Lumenal-facing; sequence PLDHHNADILYVQAELDEGYTNVHSAGNSSATNAEQMV.

Belongs to the PA-phosphatase related phosphoesterase family.

It is found in the vacuole membrane. It localises to the endoplasmic reticulum membrane. It catalyses the reaction a 1,2-diacyl-sn-glycerol 3-diphosphate + H2O = a 1,2-diacyl-sn-glycero-3-phosphate + phosphate + H(+). The catalysed reaction is a 1,2-diacyl-sn-glycero-3-phosphate + H2O = a 1,2-diacyl-sn-glycerol + phosphate. Catalyzes the dephosphorylation of diacylglycerol phosphate (DGPP) to phosphatidate (PA) and the subsequent dephosphorylation of PA to diacylglycerol (DAG). The chain is Probable diacylglycerol pyrophosphate phosphatase 1 (dpp1) from Schizosaccharomyces pombe (strain 972 / ATCC 24843) (Fission yeast).